We begin with the raw amino-acid sequence, 547 residues long: Inositol 1,4,5-trisphosphate receptor-interacting protein-like 1 (547 aa).

An N-terminal signal peptide occupies residues 1 to 16 (MAVISLLFLAVMYVVH). Residues 17–96 (HPLMVSDRMD…PFQASGQDGG (80 aa)) are Extracellular-facing. A coiled-coil region spans residues 28–66 (DTLARSRQLEKRMSEEMRQLEIEFEERSRAAEEKQKAEN). A helical transmembrane segment spans residues 97-117 (PLGWMLGNLWNAGLFCLFLIF). Residues 118 to 547 (ELLRQNMQHE…LPCSPLAGGL (430 aa)) are Cytoplasmic-facing.

This sequence belongs to the ITPRIP family.

It is found in the cell membrane. Its function is as follows. Functions as a ligand of CD3E, inhibiting TCR-CD3 complex signaling to regulate T cell activation. Induces stable CD3E-NCK1 binding, thereby preventing the CD3E-ZAP70 interaction and subsequently inhibiting the activation of the downstream ERK-NFkB signaling cascade and calcium influx. This is Inositol 1,4,5-trisphosphate receptor-interacting protein-like 1 (Itpripl1) from Rattus norvegicus (Rat).